A 580-amino-acid polypeptide reads, in one-letter code: Micronemal protein 4 (580 aa).

The N-terminal stretch at 1 to 25 is a signal peptide; it reads MRASLPVHLVVCTQLSAVWFGVAKA. Apple domains lie at 68-137, 141-214, 232-301, 305-375, 419-488, and 492-565; these read CVHS…SRSC, CFEQ…KQFC, CIQL…PKSC, CFSN…VTVG, CVHT…SRTC, and CLRR…YTFC. Disulfide bonds link Cys-68–Cys-137, Cys-93–Cys-115, Cys-97–Cys-103, Cys-141–Cys-214, Cys-166–Cys-188, Cys-170–Cys-176, Cys-232–Cys-301, Cys-257–Cys-279, Cys-261–Cys-267, Cys-305–Cys-380, Cys-332–Cys-354, Cys-336–Cys-342, Cys-419–Cys-488, Cys-444–Cys-466, and Cys-448–Cys-454.

In terms of assembly, monomer. Part of the MIC6-MIC1-MIC4 complex. Interacts (via the second apple domain) directly with MIC1 (via the beta-finger region). Interacts with murine TLR2; the interaction promotes activation of bone marrow-derived dendritic cells and macrophages in the host. Interacts with murine TLR4; the interaction promotes activation of bone marrow-derived dendritic cells and macrophages in the host. Proteolytically cleaved at the N- and C-terminus after release from the microneme.

It localises to the cytoplasmic vesicle. It is found in the secretory vesicle. Its subcellular location is the microneme. The protein localises to the host early endosome. Its activity is regulated as follows. Lacto-N-biose inhibits binding to asialofetuin, a host glycoprotein. Functionally, soluble adhesin with carbohydrate-binding activity. Binds to galactose-terminating oligosaccharides. Required for attachment of the parasite to the host cell prior to invasion. Triggers the activation of murine bone marrow-derived dendritic cells and macrophages and production of pro-inflammatory cytokines, such as IL12 (IL12B/IL12A), in host TLR2/TLR4-dependent manner. Triggers the production of anti-inflammatory cytokine IL10 in murine bone marrow-derived macrophages in host TLR4-dependent manner. Induces transient endotoxin tolerance in murine bone marrow-derived macrophages, manifested by reduced TNF-alpha (TNF) production in response to challenge with lipopolysaccharides (LPS). This is Micronemal protein 4 from Toxoplasma gondii.